We begin with the raw amino-acid sequence, 735 residues long: Dolichyl-diphosphooligosaccharide--protein glycosyltransferase subunit STT3B (735 aa).

The Cytoplasmic portion of the chain corresponds to 1–38 (MGGKSEPAKSESMATKPDLLNTSFFSFKSLKLKTKQQE). The helical transmembrane segment at 39-59 (LLLRISILGLVYILAFIARLF) threads the bilayer. The Lumenal portion of the chain corresponds to 60-142 (SVLRYESMIH…VHIREVCVLT (83 aa)). The DXD motif 1 signature appears at 70 to 72 (EFD). Aspartate 72 provides a ligand contact to Mn(2+). The chain crosses the membrane as a helical span at residues 143-161 (APFFASNTTLVAYFFGKEL). Topologically, residues 162-163 (WD) are cytoplasmic. Residues 164-181 (TGAGLVAAVLIAICPGYI) form a helical membrane-spanning segment. Residues 182 to 192 (SRSVAGSYDNE) are Lumenal-facing. Mn(2+) is bound by residues aspartate 190 and glutamate 192. A DXD motif 2 motif is present at residues 190 to 192 (DNE). A helical transmembrane segment spans residues 193-212 (AVAIFALLLTFYLFVKAVNT). Residues 213 to 214 (GS) lie on the Cytoplasmic side of the membrane. The chain crosses the membrane as a helical span at residues 215–229 (LAWALASAFGYFYMV). Over 230–234 (SAWGG) the chain is Lumenal. Residues 235–251 (YVFIINLVPLYVLVLLI) form a helical membrane-spanning segment. Topologically, residues 252-256 (TGRYS) are cytoplasmic. A helical transmembrane segment spans residues 257–282 (MRLYIAYNCMYILGMLLAMQIRFVGF). The Lumenal portion of the chain corresponds to 283–290 (QHVQSGEH). Residues 291–310 (MGAMGVFLLMQVFYFLDWVK) form a helical membrane-spanning segment. Residues 311–326 (YQLNDTKLFQTFLRIT) lie on the Cytoplasmic side of the membrane. Residues 327 to 347 (VTSAILVGGVAVGVGTASGYI) traverse the membrane as a helical segment. The Lumenal portion of the chain corresponds to 348-380 (SPWTGRFYSLLDPTYAKDHIPIIASVSEHQPTA). The short motif at 372–375 (SVSE) is the SVSE motif element. A helical transmembrane segment spans residues 381 to 403 (WSSFMFDYHILLFLFPAGLYFCF). Residues 404–409 (KRLTDA) are Cytoplasmic-facing. The chain crosses the membrane as a helical span at residues 410-426 (TIFIVMYGLTSLYFAGV). At 427 to 430 (MVRL) the chain is on the lumenal side. Arginine 429 is a binding site for dolichyl diphosphooligosaccharide. The helical transmembrane segment at 431–452 (ILVATPAVCLISAIAVSATIKN) threads the bilayer. Residues 453 to 494 (LTSLLRTKQKVSQTGSTKGAGSSKASSKVTLDQSQPFQKNGA) are Cytoplasmic-facing. Residues 495–515 (IALLVGVFYLLSRYAIHCTWV) form a helical membrane-spanning segment. At 516–735 (TAEAYSSPSI…YRVKPPTNRL (220 aa)) the chain is on the lumenal side. Positions 562–564 (WWD) are interacts with target acceptor peptide in protein substrate. The WWDYG motif motif lies at 562-566 (WWDYG). A dolichyl diphosphooligosaccharide-binding site is contributed by tyrosine 567. N-linked (GlcNAc...) asparagine glycans are attached at residues asparagine 574 and asparagine 581. Asparagine 585 carries N-linked (GlcNAc...) (high mannose) asparagine glycosylation. A DK motif motif is present at residues 629–636 (DINKFLWM).

It belongs to the STT3 family. As to quaternary structure, component of the oligosaccharyltransferase (OST) complex. The cofactor is Mg(2+). Requires Mn(2+) as cofactor. As to expression, expressed preferentially in the root but also in the shoot.

It is found in the endoplasmic reticulum membrane. It carries out the reaction a di-trans,poly-cis-dolichyl diphosphooligosaccharide + L-asparaginyl-[protein] = N(4)-(oligosaccharide-(1-&gt;4)-N-acetyl-beta-D-glucosaminyl-(1-&gt;4)-N-acetyl-beta-D-glucosaminyl)-L-asparaginyl-[protein] + a di-trans,poly-cis-dolichyl diphosphate + H(+). Its pathway is protein modification; protein glycosylation. Catalytic subunit of the oligosaccharyl transferase (OST) complex that catalyzes the initial transfer of a defined glycan (Glc(3)Man(9)GlcNAc(2) in eukaryotes) from the lipid carrier dolichol-pyrophosphate to an asparagine residue within an Asn-X-Ser/Thr consensus motif in nascent polypeptide chains, the first step in protein N-glycosylation. N-glycosylation occurs cotranslationally and the complex associates with the Sec61 complex at the channel-forming translocon complex that mediates protein translocation across the endoplasmic reticulum (ER). All subunits are required for a maximal enzyme activity. This subunit contains the active site and the acceptor peptide and donor lipid-linked oligosaccharide (LLO) binding pockets. The sequence is that of Dolichyl-diphosphooligosaccharide--protein glycosyltransferase subunit STT3B (STT3B) from Arabidopsis thaliana (Mouse-ear cress).